The primary structure comprises 623 residues: Aspartate--tRNA(Asp/Asn) ligase (623 aa).

Glu175 provides a ligand contact to L-aspartate. The tract at residues 199 to 202 is aspartate; it reads QQFK. L-aspartate is bound by residues Arg221 and His455. 221–223 contributes to the ATP binding site; it reads RDE. Glu517 is a binding site for ATP. Residue Arg524 coordinates L-aspartate. Residue 569–572 coordinates ATP; sequence GVDR.

This sequence belongs to the class-II aminoacyl-tRNA synthetase family. Type 1 subfamily. Homodimer.

It localises to the cytoplasm. The catalysed reaction is tRNA(Asx) + L-aspartate + ATP = L-aspartyl-tRNA(Asx) + AMP + diphosphate. Aspartyl-tRNA synthetase with relaxed tRNA specificity since it is able to aspartylate not only its cognate tRNA(Asp) but also tRNA(Asn). Reaction proceeds in two steps: L-aspartate is first activated by ATP to form Asp-AMP and then transferred to the acceptor end of tRNA(Asp/Asn). This is Aspartate--tRNA(Asp/Asn) ligase from Methylocella silvestris (strain DSM 15510 / CIP 108128 / LMG 27833 / NCIMB 13906 / BL2).